Consider the following 282-residue polypeptide: PILR alpha-associated neural protein (282 aa).

Positions 1-31 (MESRMWPALLLSHLLPLWPLLLLPLPPPAQG) are cleaved as a signal peptide. Residues 28–99 (PAQGSSSSPR…PSGFEEGPPS (72 aa)) are disordered. The Extracellular segment spans residues 32–178 (SSSSPRTPPA…FGGRGEGVDP (147 aa)). Residues 46–56 (PCARGGPSAPR) are compositionally biased toward low complexity. Thr140 is a glycosylation site (O-linked (GalNAc...) threonine). Residues 179 to 199 (QLYVTITISIIIVLVATGIIF) form a helical membrane-spanning segment. Residues 200–282 (KFCWDRSQKR…QLNRIPLVNL (83 aa)) lie on the Cytoplasmic side of the membrane. A disordered region spans residues 209 to 282 (RRRPSGQQGA…QLNRIPLVNL (74 aa)). Positions 213 to 229 (SGQQGALRQEESQQPLT) are enriched in polar residues.

O-glycosylation at Thr-140 is essential for recognition by PILRA. Mainly expressed in adult brain and cerebellum. Weaker expression in fetal brain and virtually no expression in spleen, heart, kidney, liver and dorsal ganglion relative to brain.

Its subcellular location is the membrane. Its function is as follows. Acts as a ligand for PILRA in neural tissues, where it may be involved in immune regulation. The protein is PILR alpha-associated neural protein (PIANP) of Homo sapiens (Human).